The primary structure comprises 199 residues: MKTLFFATSNINKINEVKQILDIPKIKIEIPQNFDIKETGKTFKENSLLKAKALFKILNNKQPVFSEDSGLCIEALNMEPGIYSKRYDQYKLGKKLDNNEKNHLIIDLMREKNNRTAYFICVISYIDVDGTINNFEGMLKGTIALNIDYYQKNGFGYDPIFLTTNNKRLSELNLEEKNKISHRGIAFDKFKKFLMQFLD.

8–13 (TSNINK) lines the substrate pocket. Asp68 functions as the Proton acceptor in the catalytic mechanism. Asp68 contributes to the Mg(2+) binding site. Residues Ser69, 155–158 (FGYD), Lys177, and 182–183 (HR) contribute to the substrate site.

Belongs to the HAM1 NTPase family. As to quaternary structure, homodimer. Mg(2+) serves as cofactor.

It carries out the reaction XTP + H2O = XMP + diphosphate + H(+). The catalysed reaction is dITP + H2O = dIMP + diphosphate + H(+). It catalyses the reaction ITP + H2O = IMP + diphosphate + H(+). Pyrophosphatase that catalyzes the hydrolysis of nucleoside triphosphates to their monophosphate derivatives, with a high preference for the non-canonical purine nucleotides XTP (xanthosine triphosphate), dITP (deoxyinosine triphosphate) and ITP. Seems to function as a house-cleaning enzyme that removes non-canonical purine nucleotides from the nucleotide pool, thus preventing their incorporation into DNA/RNA and avoiding chromosomal lesions. This is dITP/XTP pyrophosphatase from Borrelia duttonii (strain Ly).